The chain runs to 173 residues: Crossover junction endodeoxyribonuclease RuvC (173 aa).

Active-site residues include Asp-8, Glu-67, and Asp-139. The Mg(2+) site is built by Asp-8, Glu-67, and Asp-139.

It belongs to the RuvC family. In terms of assembly, homodimer which binds Holliday junction (HJ) DNA. The HJ becomes 2-fold symmetrical on binding to RuvC with unstacked arms; it has a different conformation from HJ DNA in complex with RuvA. In the full resolvosome a probable DNA-RuvA(4)-RuvB(12)-RuvC(2) complex forms which resolves the HJ. The cofactor is Mg(2+).

It localises to the cytoplasm. The enzyme catalyses Endonucleolytic cleavage at a junction such as a reciprocal single-stranded crossover between two homologous DNA duplexes (Holliday junction).. Its function is as follows. The RuvA-RuvB-RuvC complex processes Holliday junction (HJ) DNA during genetic recombination and DNA repair. Endonuclease that resolves HJ intermediates. Cleaves cruciform DNA by making single-stranded nicks across the HJ at symmetrical positions within the homologous arms, yielding a 5'-phosphate and a 3'-hydroxyl group; requires a central core of homology in the junction. The consensus cleavage sequence is 5'-(A/T)TT(C/G)-3'. Cleavage occurs on the 3'-side of the TT dinucleotide at the point of strand exchange. HJ branch migration catalyzed by RuvA-RuvB allows RuvC to scan DNA until it finds its consensus sequence, where it cleaves and resolves the cruciform DNA. This Sodalis glossinidius (strain morsitans) protein is Crossover junction endodeoxyribonuclease RuvC.